Here is a 213-residue protein sequence, read N- to C-terminus: 2-dehydro-3-deoxy-phosphogluconate aldolase (213 aa).

Glu45 (proton acceptor) is an active-site residue. 3 residues coordinate pyruvate: Arg49, Thr73, and Lys133. Lys133 (schiff-base intermediate with substrate) is an active-site residue.

The protein belongs to the KHG/KDPG aldolase family. In terms of assembly, homotrimer.

Its subcellular location is the cytoplasm. It catalyses the reaction 2-dehydro-3-deoxy-6-phospho-D-gluconate = D-glyceraldehyde 3-phosphate + pyruvate. Its pathway is carbohydrate acid metabolism; 2-dehydro-3-deoxy-D-gluconate degradation; D-glyceraldehyde 3-phosphate and pyruvate from 2-dehydro-3-deoxy-D-gluconate: step 2/2. Functionally, involved in the degradation of glucose via the Entner-Doudoroff pathway. Catalyzes the reversible, stereospecific retro-aldol cleavage of 2-keto-3-deoxy-6-phosphogluconate (KDPG) to pyruvate and D-glyceraldehyde-3-phosphate. The chain is 2-dehydro-3-deoxy-phosphogluconate aldolase (eda) from Dickeya dadantii (strain 3937) (Erwinia chrysanthemi (strain 3937)).